A 211-amino-acid polypeptide reads, in one-letter code: uncharacterized protein (211 aa).

Residues alanine 155 to serine 211 form a disordered region. Positions threonine 178 to aspartate 188 are enriched in acidic residues. Positions serine 195–serine 211 are enriched in low complexity.

This is an uncharacterized protein from Schizosaccharomyces pombe (strain 972 / ATCC 24843) (Fission yeast).